We begin with the raw amino-acid sequence, 360 residues long: Cysteine proteinase 2 (360 aa).

A signal peptide spans 1–19; that stretch reads MVPRRLFVLAVVVLADTAA. Positions 20 to 142 are cleaved as a propeptide — activation peptide; the sequence is VVNSGFADSN…NHRMRAAAVA (123 aa). An N-linked (GlcNAc...) asparagine glycan is attached at Asn125. 2 disulfide bridges follow: Cys164–Cys207 and Cys198–Cys240. Residue Cys167 is part of the active site. Asn256 carries an N-linked (GlcNAc...) asparagine glycan. A disulfide bridge links Cys298 with Cys348. Catalysis depends on residues His307 and Asn327.

This sequence belongs to the peptidase C1 family. As to expression, expressed at the onset of germination.

It is found in the vacuole. Involved in the degradation of the storage protein zein. May play a role in proteolysis during emergencies. This Zea mays (Maize) protein is Cysteine proteinase 2 (CCP2).